A 106-amino-acid polypeptide reads, in one-letter code: Large ribosomal subunit protein bL21 (106 aa).

This sequence belongs to the bacterial ribosomal protein bL21 family. Part of the 50S ribosomal subunit. Contacts protein L20.

This protein binds to 23S rRNA in the presence of protein L20. This is Large ribosomal subunit protein bL21 from Coprothermobacter proteolyticus (strain ATCC 35245 / DSM 5265 / OCM 4 / BT).